Consider the following 344-residue polypeptide: S-methyl-5'-thioadenosine phosphorylase (344 aa).

Residues Thr45, 88 to 89 (RH), and 121 to 122 (SA) contribute to the phosphate site. Met238 contacts substrate. Ser239 is a phosphate binding site. Residue 262–264 (DYD) coordinates substrate.

Belongs to the PNP/MTAP phosphorylase family. MTAP subfamily. As to quaternary structure, homotrimer.

Its subcellular location is the cytoplasm. It is found in the nucleus. It catalyses the reaction S-methyl-5'-thioadenosine + phosphate = 5-(methylsulfanyl)-alpha-D-ribose 1-phosphate + adenine. The protein operates within amino-acid biosynthesis; L-methionine biosynthesis via salvage pathway; S-methyl-5-thio-alpha-D-ribose 1-phosphate from S-methyl-5'-thioadenosine (phosphorylase route): step 1/1. In terms of biological role, catalyzes the reversible phosphorylation of S-methyl-5'-thioadenosine (MTA) to adenine and 5-methylthioribose-1-phosphate. Involved in the breakdown of MTA, a major by-product of polyamine biosynthesis. Responsible for the first step in the methionine salvage pathway after MTA has been generated from S-adenosylmethionine. Has broad substrate specificity with 6-aminopurine nucleosides as preferred substrates. The protein is S-methyl-5'-thioadenosine phosphorylase of Candida albicans (strain WO-1) (Yeast).